The primary structure comprises 248 residues: Tyrosine recombinase XerD-like (248 aa).

Residues 1–72 enclose the Core-binding (CB) domain; it reads MKSYIEPFIA…TANQFLYYLY (72 aa). The region spanning 85 to 248 is the Tyr recombinase domain; sequence DTMKVMRTEK…PVTLEKYYKS (164 aa). Catalysis depends on residues Lys149 and Arg213. Catalysis depends on Tyr245, which acts as the O-(3'-phospho-DNA)-tyrosine intermediate.

This sequence belongs to the 'phage' integrase family. XerD-like subfamily.

It is found in the cytoplasm. In terms of biological role, putative tyrosine recombinase. Not involved in the cutting and rejoining of the recombining DNA molecules on dif(SL) site. The chain is Tyrosine recombinase XerD-like from Streptococcus pyogenes serotype M28 (strain MGAS6180).